We begin with the raw amino-acid sequence, 473 residues long: Peptidoglycan DL-endopeptidase CwlO (473 aa).

A signal peptide spans 1-30 (MRKSLITLGLASVIGTSSFLIPFTSKTASA). Disordered regions lie at residues 31–52 (ETLDEKKQKIESKQSEVASSIE), 79–98 (ALDTSNKIEDKKEENDKTKE), and 237–337 (EASE…GTVI). A compositionally biased stretch (basic and acidic residues) spans 33–44 (LDEKKQKIESKQ). Residues 241–250 (LANQKANTEA) are compositionally biased toward polar residues. 2 stretches are compositionally biased toward basic and acidic residues: residues 251–260 (EQARIKKEQE) and 267–277 (KKQEEAQKASD). Positions 291–337 (SSKASSSDDSSDNSSDNSSNGSSNSSSNGSSSKKSSGSNSNSGGTVI) are enriched in low complexity. The NlpC/P60 domain occupies 340–471 (SGGIEGAISV…AAFKGVVRRV (132 aa)). Cys377 (nucleophile) is an active-site residue. The active-site Proton acceptor is the His431. The active site involves Asn443.

It belongs to the peptidase C40 family. Identified in the extracellular proteome as a number of processing products of about 50 and 30 kDa.

It is found in the secreted. Its subcellular location is the cell wall. Its activity is regulated as follows. Detected in exponentially growing cells, the 50 and 30 kDa processing products disappear upon entry into stationary phase with the concomitant appearance of a 20 kDa products. The 50 kDa form persists in the absence of extracellular proteases. Functionally, the C-terminal part of CwlO shows a cell wall hydrolytic DL-endopeptidase activity. The protein is Peptidoglycan DL-endopeptidase CwlO (cwlO) of Bacillus subtilis (strain 168).